The primary structure comprises 319 residues: Acetyl esterase (319 aa).

The Involved in the stabilization of the negatively charged intermediate by the formation of the oxyanion hole signature appears at 91–93 (HGG). Catalysis depends on residues Ser-165, Asp-262, and His-292.

It belongs to the 'GDXG' lipolytic enzyme family. In terms of assembly, homodimer. Interacts with MalT and MelA.

It is found in the cytoplasm. Its function is as follows. Displays esterase activity towards short chain fatty esters (acyl chain length of up to 8 carbons). Able to hydrolyze triacetylglycerol (triacetin) and tributyrylglycerol (tributyrin), but not trioleylglycerol (triolein) or cholesterol oleate. Negatively regulates MalT activity by antagonizing maltotriose binding. Inhibits MelA galactosidase activity. This Escherichia coli O7:K1 (strain IAI39 / ExPEC) protein is Acetyl esterase.